Here is a 147-residue protein sequence, read N- to C-terminus: Putative pre-16S rRNA nuclease (147 aa).

It belongs to the YqgF nuclease family.

The protein resides in the cytoplasm. Functionally, could be a nuclease involved in processing of the 5'-end of pre-16S rRNA. The polypeptide is Putative pre-16S rRNA nuclease (Latilactobacillus sakei subsp. sakei (strain 23K) (Lactobacillus sakei subsp. sakei)).